The primary structure comprises 192 residues: Fe/S biogenesis protein NfuA (192 aa).

Cys150 and Cys153 together coordinate [4Fe-4S] cluster.

It belongs to the NfuA family. As to quaternary structure, homodimer. It depends on [4Fe-4S] cluster as a cofactor.

Functionally, involved in iron-sulfur cluster biogenesis. Binds a 4Fe-4S cluster, can transfer this cluster to apoproteins, and thereby intervenes in the maturation of Fe/S proteins. Could also act as a scaffold/chaperone for damaged Fe/S proteins. This Buchnera aphidicola subsp. Acyrthosiphon pisum (strain APS) (Acyrthosiphon pisum symbiotic bacterium) protein is Fe/S biogenesis protein NfuA.